The sequence spans 229 residues: Potassium/proton antiporter CemA (229 aa).

2 consecutive transmembrane segments (helical) span residues 7–27 (FTPL…SFSV) and 107–127 (ILHF…SILG).

It belongs to the CemA family.

Its subcellular location is the plastid. The protein localises to the chloroplast inner membrane. The catalysed reaction is K(+)(in) + H(+)(out) = K(+)(out) + H(+)(in). In terms of biological role, contributes to K(+)/H(+) antiport activity by supporting proton efflux to control proton extrusion and homeostasis in chloroplasts in a light-dependent manner to modulate photosynthesis. Prevents excessive induction of non-photochemical quenching (NPQ) under continuous-light conditions. Indirectly promotes efficient inorganic carbon uptake into chloroplasts. The chain is Potassium/proton antiporter CemA from Solanum tuberosum (Potato).